Here is a 492-residue protein sequence, read N- to C-terminus: Homoserine O-acetyltransferase (492 aa).

Residues 47–354 (NVILVCHALT…NYGHDAFLLE (308 aa)) enclose the AB hydrolase-1 domain. Ser152 acts as the Nucleophile in catalysis. Residue Arg221 participates in substrate binding. Active-site residues include Asp315 and His348. Residue Asp349 coordinates substrate. CBS domains are found at residues 375 to 432 (MKLD…FTTL) and 436 to 492 (LTKN…HRCT).

Belongs to the AB hydrolase superfamily. MetX family. As to quaternary structure, homodimer.

The protein resides in the cytoplasm. It carries out the reaction L-homoserine + acetyl-CoA = O-acetyl-L-homoserine + CoA. It functions in the pathway amino-acid biosynthesis; L-methionine biosynthesis via de novo pathway; O-acetyl-L-homoserine from L-homoserine: step 1/1. In terms of biological role, transfers an acetyl group from acetyl-CoA to L-homoserine, forming acetyl-L-homoserine. This is Homoserine O-acetyltransferase from Methanosalsum zhilinae (strain DSM 4017 / NBRC 107636 / OCM 62 / WeN5) (Methanohalophilus zhilinae).